The primary structure comprises 140 residues: Nucleoside diphosphate kinase (140 aa).

6 residues coordinate ATP: lysine 9, phenylalanine 57, arginine 85, threonine 91, arginine 102, and asparagine 112. Histidine 115 serves as the catalytic Pros-phosphohistidine intermediate.

The protein belongs to the NDK family. Homotetramer. Requires Mg(2+) as cofactor.

The protein localises to the cytoplasm. It catalyses the reaction a 2'-deoxyribonucleoside 5'-diphosphate + ATP = a 2'-deoxyribonucleoside 5'-triphosphate + ADP. It carries out the reaction a ribonucleoside 5'-diphosphate + ATP = a ribonucleoside 5'-triphosphate + ADP. Functionally, major role in the synthesis of nucleoside triphosphates other than ATP. The ATP gamma phosphate is transferred to the NDP beta phosphate via a ping-pong mechanism, using a phosphorylated active-site intermediate. This is Nucleoside diphosphate kinase from Chlorobium limicola (strain DSM 245 / NBRC 103803 / 6330).